A 335-amino-acid polypeptide reads, in one-letter code: Fructose-1,6-bisphosphatase class 1 (335 aa).

The Mg(2+) site is built by Glu91, Asp113, Leu115, and Asp116. Residues Asp116–Ser119, Asn208, and Lys274 each bind substrate. Glu280 lines the Mg(2+) pocket.

It belongs to the FBPase class 1 family. As to quaternary structure, homotetramer. The cofactor is Mg(2+).

The protein localises to the cytoplasm. It carries out the reaction beta-D-fructose 1,6-bisphosphate + H2O = beta-D-fructose 6-phosphate + phosphate. It participates in carbohydrate biosynthesis; gluconeogenesis. The protein is Fructose-1,6-bisphosphatase class 1 of Chromobacterium violaceum (strain ATCC 12472 / DSM 30191 / JCM 1249 / CCUG 213 / NBRC 12614 / NCIMB 9131 / NCTC 9757 / MK).